Here is a 113-residue protein sequence, read N- to C-terminus: Large ribosomal subunit protein P2B (113 aa).

Positions 66–113 (PSGGGAIDMGAPAAVAGGGAAPAEEAKKEEKVEEKEESDEDMGFSLFD) are disordered. Basic and acidic residues predominate over residues 89–99 (EEAKKEEKVEE).

It belongs to the eukaryotic ribosomal protein P1/P2 family. As to quaternary structure, P1 and P2 exist as dimers at the large ribosomal subunit. Post-translationally, phosphorylated.

In terms of biological role, plays an important role in the elongation step of protein synthesis. This is Large ribosomal subunit protein P2B (RPP2B) from Zea mays (Maize).